We begin with the raw amino-acid sequence, 335 residues long: HTH-type transcriptional regulator RipA (335 aa).

The HTH araC/xylS-type domain occupies 119–216 (RKVAQKLIAY…GDTPSSFTSP (98 aa)). 2 DNA-binding regions (H-T-H motif) span residues 136–157 (LEFA…VAST) and 183–206 (IGQV…KRHT).

In terms of biological role, under iron limitation, represses the acn (aconitase), catA (catechol 1,2 dioxygenase), leuCD (isopropylmalate dehydratase), narKGHJI (nitrite/nitrate transporter and nitrate reductase), sdhCAB (succinate dehydrogenase), pta (phosphotransacetylase) and katA (catalase) genes. The chain is HTH-type transcriptional regulator RipA from Corynebacterium diphtheriae (strain ATCC 700971 / NCTC 13129 / Biotype gravis).